The following is a 281-amino-acid chain: MLLEFTKMHGLGNDFVVLDLISQRAYLDTTTIQRMADRHFGIGFDQLLIVEPPDYPNVDFKYRIFNADGSEVEQCGNGVRCFARFVHERQLTKKTKIKVQTKAGIVEPELGPNGWVRVNMGYPKFMPHEIPFVTEEFEALYTLELANEQSLKIDVVNMGNPHAVTIVPDVLTADVATMGPQVESHVRFPQRVNAGFMQIVDEKHIRLRVFERGVGETLACGTGACAAAVSGMRRGLLANEVEVELAGGKLQIAWQEGDVVWMTGPTANVYEGRLDLRYFQS.

Asn13, Gln46, and Asn66 together coordinate substrate. Cys75 serves as the catalytic Proton donor. Residues 76–77, Asn160, Asn193, and 211–212 each bind substrate; these read GN and ER. Cys220 functions as the Proton acceptor in the catalytic mechanism. Residue 221–222 participates in substrate binding; that stretch reads GT.

It belongs to the diaminopimelate epimerase family. In terms of assembly, homodimer.

Its subcellular location is the cytoplasm. The enzyme catalyses (2S,6S)-2,6-diaminopimelate = meso-2,6-diaminopimelate. Its pathway is amino-acid biosynthesis; L-lysine biosynthesis via DAP pathway; DL-2,6-diaminopimelate from LL-2,6-diaminopimelate: step 1/1. Functionally, catalyzes the stereoinversion of LL-2,6-diaminopimelate (L,L-DAP) to meso-diaminopimelate (meso-DAP), a precursor of L-lysine and an essential component of the bacterial peptidoglycan. The protein is Diaminopimelate epimerase of Acinetobacter baylyi (strain ATCC 33305 / BD413 / ADP1).